The following is a 574-amino-acid chain: MSIQENISSLQLRSWVSKSQRDLAKSILIGAPGGPAGYLRRASVAQLTQELGTAFFQQQQLPAAMADTFLEHLCLLDIDSEPVAARSTSIIATIGPASRSVERLKEMIKAGMNIARLNFSHGSHEYHAESIANVREAVESFAGSPLSYRPVAIALDTKGPEIRTGILQGGPESEVELVKGSQVLVTVDPAFRTRGNANTVWVDYPNIVRVVPVGGRIYIDDGLISLVVQKIGPEGLVTQVENGGVLGSRKGVNLPGAQVDLPGLSEQDVRDLRFGVEHGVDIVFASFVRKASDVAAVRAALGPEGHGIKIISKIENHEGVKRFDEILEVSDGIMVARGDLGIEIPAEKVFLAQKMMIGRCNLAGKPVVCATQMLESMITKPRPTRAETSDVANAVLDGADCIMLSGETAKGNFPVEAVKMQHAIAREAEAAVYHRQLFEELRRAAPLSRDPTEVTAIGAVEAAFKCCAAAIIVLTTTGRSAQLLSRYRPRAAVIAVTRSAQAARQVHLCRGVFPLLYREPPEAIWADDVDRRVQFGIESGKLRGFLRVGDLVIVVTGWRPGSGYTNIMRVLSIS.

Phosphoserine occurs at positions 2, 19, 26, and 43. Arg116 is a binding site for substrate. The K(+) site is built by Asn118, Ser120, Asp156, and Thr157. Residue 118 to 121 (NFSH) coordinates ATP. 2 residues coordinate ATP: Arg163 and Lys250. Ser292 is subject to Phosphoserine. A substrate-binding site is contributed by Lys313. A Mn(2+)-binding site is contributed by Glu315. Substrate is bound by residues Gly338, Asp339, and Thr371. Asp339 provides a ligand contact to Mn(2+). Residues 475-480 (TTTGRS), Trp525, Arg532, and 559-564 (RPGSGY) each bind beta-D-fructose 1,6-bisphosphate.

It belongs to the pyruvate kinase family. As to quaternary structure, homotetramer. The cofactor is Mg(2+). Requires Mn(2+) as cofactor. It depends on K(+) as a cofactor.

The catalysed reaction is pyruvate + ATP = phosphoenolpyruvate + ADP + H(+). It participates in carbohydrate degradation; glycolysis; pyruvate from D-glyceraldehyde 3-phosphate: step 5/5. Its activity is regulated as follows. Allosterically activated by fructose 1,6-bisphosphate. Functionally, pyruvate kinase that catalyzes the conversion of phosphoenolpyruvate to pyruvate with the synthesis of ATP, and which plays a key role in glycolysis. The polypeptide is Pyruvate kinase PKLR (PKLR) (Homo sapiens (Human)).